Reading from the N-terminus, the 395-residue chain is Elongation factor Tu (395 aa).

A tr-type G domain is found at 10–204; sequence KPHVNVGTIG…AVDAYIDTPL (195 aa). The tract at residues 19–26 is G1; sequence GHVDHGKT. Residue 19 to 26 coordinates GTP; the sequence is GHVDHGKT. A Mg(2+)-binding site is contributed by Thr26. Positions 60–64 are G2; that stretch reads GITIN. The G3 stretch occupies residues 81 to 84; sequence DCPG. GTP is bound by residues 81–85 and 136–139; these read DCPGH and NKAD. Positions 136–139 are G4; sequence NKAD. The G5 stretch occupies residues 174 to 176; it reads SAL.

The protein belongs to the TRAFAC class translation factor GTPase superfamily. Classic translation factor GTPase family. EF-Tu/EF-1A subfamily. In terms of assembly, monomer.

The protein localises to the cytoplasm. It catalyses the reaction GTP + H2O = GDP + phosphate + H(+). GTP hydrolase that promotes the GTP-dependent binding of aminoacyl-tRNA to the A-site of ribosomes during protein biosynthesis. In Acholeplasma laidlawii (strain PG-8A), this protein is Elongation factor Tu.